Reading from the N-terminus, the 5641-residue chain is Cyclochlorotine synthetase (5641 aa).

A disordered region spans residues 95–124 (PENLNGHLIGSTNGHKKQWENDSADDKRGQ). Basic and acidic residues predominate over residues 111 to 124 (KQWENDSADDKRGQ). The segment at 217 to 622 (FTENVQRYPT…GRRDTQVKIR (406 aa)) is adenylation (A) domain 1. The region spanning 816 to 892 (TEEEYKIQTL…DLVSNCKMSA (77 aa)) is the Carrier 1 domain. Positions 821–889 (KIQTLKEIWS…QLSDLVSNCK (69 aa)) are thiolation (T) domain 1. Ser853 is modified (O-(pantetheine 4'-phosphoryl)serine). Residues 926 to 1333 (EDVYPCTPLQ…AHVAEQIGQP (408 aa)) are condensation (C) domain 1. An adenylation (A) domain 2 region spans residues 1390–1768 (DGNLTFEELN…ISRATTQIKI (379 aa)). Positions 1902–1978 (IELSEKQENM…QLVMIATELT (77 aa)) constitute a Carrier 2 domain. The segment at 1907–1975 (KQENMARLWA…RFDQLVMIAT (69 aa)) is thiolation (T) domain 2. Residue Ser1939 is modified to O-(pantetheine 4'-phosphoryl)serine. A condensation (C) domain 2 region spans residues 2022-2438 (DIYACTPFQE…DLASEQDLAK (417 aa)). The segment at 2459-2859 (AEKARQHPNK…GRADTQVKLR (401 aa)) is adenylation (A) domain 3. In terms of domain architecture, Carrier 3 spans 2976–3052 (GPLTEMETTL…GMAIKIQPIH (77 aa)). The thiolation (T) domain 3 stretch occupies residues 2977-3049 (PLTEMETTLA…NLAGMAIKIQ (73 aa)). Ser3013 carries the O-(pantetheine 4'-phosphoryl)serine modification. The tract at residues 3089-3482 (DIYPCTPLQV…LETVLSAFST (394 aa)) is condensation (C) domain 3. The segment at 3523-3873 (VQRAPDKVAI…IARKDLQVKL (351 aa)) is adenylation (A) domain 4. Residues 4005-4081 (IPSTPTEMKM…ELATKIAPRI (77 aa)) enclose the Carrier 4 domain. Residues 4010-4078 (TEMKMQQLWA…RLSELATKIA (69 aa)) form a thiolation (T) domain 4 region. Ser4042 carries the post-translational modification O-(pantetheine 4'-phosphoryl)serine. The interval 4123 to 4549 (KDVYPCTPLQ…QSLDSLSQQD (427 aa)) is condensation (C) domain 4. An adenylation (A) domain 5 region spans residues 4574 to 4982 (QEIAGRHPDA…GRIGTDIKLR (409 aa)). Residues 5118–5194 (PPSTQEEKVI…SLAEKISWES (77 aa)) enclose the Carrier 5 domain. Residues 5123–5191 (EEKVIAALWA…KLASLAEKIS (69 aa)) form a thiolation (T) domain 5 region. Ser5155 is modified (O-(pantetheine 4'-phosphoryl)serine). The segment at 5260–5556 (AYLDIGPDVQ…DKCTTCVSGS (297 aa)) is condensation (C) domain 5.

This sequence belongs to the NRP synthetase family.

The protein operates within mycotoxin biosynthesis. In terms of biological role, nonribosomal peptide synthetase; part of the gene cluster that mediates the biosynthesis of the mycotoxin cyclochlorotine, a hepatotoxic and carcinogenic cyclic chlorinated pentapeptide. Within the pathway, The NRPS cctN initially catalyzes the condensation of L-serine (Ser), Pro, L-2-aminobutyrate (2Abu), Ser, and beta-Phe in this order. During the chain elongation, side-chain hydroxy group of Ser4 would be used as a nucleophile, giving isocyclotine as a product of terminal condensation-like (CT) domain-catalyzed cyclization. After the dichlorination of Pro2 catalyzed by cctP2 to produce isocyclochlorotine, the cctO-mediated transacylation of isocyclochlorotine can furnish cyclochlorotine. The subsequent hydroxylation of cyclochlorotine by cctR yields hydroxycyclochlorotine as the final product. CctP1 probably acts as a phenylalanine aminomutase and provides the uncommon building block beta-Phe. Furthermore, 2Abu can be synthesized from threonine by one of the threonine dehydratases and transaminases localized outside of the cluster. The functions of the remaining proteins encoded by the cluster, cctM and cctT, have not been identified yet. The sequence is that of Cyclochlorotine synthetase from Talaromyces islandicus (Penicillium islandicum).